A 146-amino-acid polypeptide reads, in one-letter code: Hemoglobin subunit beta (146 aa).

A Globin domain is found at Gln-2–His-146. His-63 and His-92 together coordinate heme b.

Belongs to the globin family. Heterotetramer of two alpha chains and two beta chains. In terms of tissue distribution, red blood cells.

In terms of biological role, involved in oxygen transport from the lung to the various peripheral tissues. The sequence is that of Hemoglobin subunit beta (HBB) from Apus apus (Common swift).